Reading from the N-terminus, the 301-residue chain is Putative phosphoenolpyruvate synthase regulatory protein (301 aa).

Over residues Met-1–Pro-24 the composition is skewed to low complexity. Residues Met-1–Gly-27 are disordered. Gly-181–Thr-188 lines the ADP pocket.

Belongs to the pyruvate, phosphate/water dikinase regulatory protein family. PSRP subfamily.

It carries out the reaction [pyruvate, water dikinase] + ADP = [pyruvate, water dikinase]-phosphate + AMP + H(+). It catalyses the reaction [pyruvate, water dikinase]-phosphate + phosphate + H(+) = [pyruvate, water dikinase] + diphosphate. In terms of biological role, bifunctional serine/threonine kinase and phosphorylase involved in the regulation of the phosphoenolpyruvate synthase (PEPS) by catalyzing its phosphorylation/dephosphorylation. The sequence is that of Putative phosphoenolpyruvate synthase regulatory protein from Cupriavidus pinatubonensis (strain JMP 134 / LMG 1197) (Cupriavidus necator (strain JMP 134)).